A 251-amino-acid polypeptide reads, in one-letter code: tRNA (guanine-N(1)-)-methyltransferase (251 aa).

S-adenosyl-L-methionine is bound by residues Gly-122 and 142 to 147 (IGDYVL). The interval 226–251 (RARRPDLFATRPQPNRQKPPKNTTDG) is disordered. Residues 237 to 251 (PQPNRQKPPKNTTDG) show a composition bias toward polar residues.

Belongs to the RNA methyltransferase TrmD family. In terms of assembly, homodimer.

Its subcellular location is the cytoplasm. It catalyses the reaction guanosine(37) in tRNA + S-adenosyl-L-methionine = N(1)-methylguanosine(37) in tRNA + S-adenosyl-L-homocysteine + H(+). Functionally, specifically methylates guanosine-37 in various tRNAs. The chain is tRNA (guanine-N(1)-)-methyltransferase from Rhodopseudomonas palustris (strain BisB18).